A 321-amino-acid polypeptide reads, in one-letter code: Fructose-1,6-bisphosphatase 2 class 2 (321 aa).

Asp32, Glu56, Asp84, and Glu87 together coordinate Mn(2+). Residues 87–89, Tyr118, 163–165, 185–187, and Gly209 each bind substrate; these read EGT, KPR, and DGD. Glu212 serves as a coordination point for Mn(2+).

Belongs to the FBPase class 2 family. Homodimer. Mn(2+) is required as a cofactor.

The catalysed reaction is beta-D-fructose 1,6-bisphosphate + H2O = beta-D-fructose 6-phosphate + phosphate. With respect to regulation, competitively inhibited by low concentrations of phosphate (IC50 of 1.2 mM) and is also sensitive to Li(+) (IC50 of 15.8 mM). Also inhibited by 1 mM ATP or 50 mM KCl (60% and 20% residual activity, respectively). Slightly activated (40-50%) by the addition of 1 mM dithiothreitol in vitro. Its function is as follows. Catalyzes the hydrolysis of fructose 1,6-bisphosphate to fructose 6-phosphate. Also displays a low activity toward glucose 1,6-bisphosphate, and no activity against ribulose 1,5-bisphosphate, fructose 2,6-bisphosphate, or fructose 1-phosphate. This chain is Fructose-1,6-bisphosphatase 2 class 2 (yggF), found in Escherichia coli (strain K12).